We begin with the raw amino-acid sequence, 291 residues long: Pca regulon regulatory protein (291 aa).

The interval 1-22 is disordered; the sequence is MSDETLVNDPVNPEPARPASAA. In terms of domain architecture, HTH iclR-type spans 45-105; the sequence is MTSLARGLAV…SDGRTYSLLP (61 aa). The segment at residues 67–86 is a DNA-binding region (H-T-H motif); that stretch reads IAQISHRTEIPRAAVRRCLH. The IclR-ED domain maps to 120–291; that stretch reads LAISAQPYLD…SRDLCHQLFG (172 aa).

Its function is as follows. Positive regulator of all genes within the pca regulon, pcaBDC, pcaIJ and pcaF. Also required for the chemotactic response to aromatic compounds. The polypeptide is Pca regulon regulatory protein (pcaR) (Pseudomonas putida (Arthrobacter siderocapsulatus)).